Consider the following 47-residue polypeptide: Protein DVU_0533 (47 aa).

A helical membrane pass occupies residues 18-37 (WTYILMGVTLLVYVGYWLFL).

It localises to the cell membrane. HMWC (high-molecular-weight cytochrome c), ORF2, ORF3, ORF4, ORF5 and ORF6 in the HMC operon form a transmembrane protein complex that allows electron flow from the periplasmic hydrogenase to the cytoplasmic enzymes that catalyze reduction of sulfates. In Nitratidesulfovibrio vulgaris (strain ATCC 29579 / DSM 644 / CCUG 34227 / NCIMB 8303 / VKM B-1760 / Hildenborough) (Desulfovibrio vulgaris), this protein is Protein DVU_0533.